The following is a 545-amino-acid chain: Sterol O-acyltransferase 1 (545 aa).

N-acetylmethionine is present on Met1. Residues 1 to 24 (MVGEETSLRNRLSRSAENPEQDEA) form a disordered region. The Cytoplasmic segment spans residues 1–133 (MVGEETSLRN…LDELFEVDHI (133 aa)). Ser7 bears the Phosphoserine mark. Residues 9 to 18 (RNRLSRSAEN) are compositionally biased toward polar residues. Cholesterol is bound at residue His132. A helical transmembrane segment spans residues 134–155 (RTIYHMFIALLIIFILSTLVVD). Residues 156–175 (YIDEGRLVLEFSLLAYAFGQ) lie on the Lumenal side of the membrane. The chain crosses the membrane as a helical span at residues 176 to 201 (FPIVIWTWWAMFLSTLAIPYFLFQRW). The Cytoplasmic segment spans residues 202-213 (AHGYSKSSHPLI). Residues 214–239 (YSLIHGAFFLVFQLGILGFIPTYVVL) form a helical membrane-spanning segment. The Lumenal portion of the chain corresponds to 240-247 (AYTLPPAS). A helical transmembrane segment spans residues 248–271 (RFILILEQIRLVMKAHSYVRENVP). Residues 272–314 (RVLSAAKEKSSTVPVPTVNQYLYFLFAPTLIYRDSYPRTPTVR) are Cytoplasmic-facing. Residues 315–347 (WGYVAMQFLQVFGCLFYVYYIFERLCAPLFRNI) form a helical membrane-spanning segment. At 348 to 364 (KQEPFSARVLVLCVFNS) the chain is on the lumenal side. The chain crosses the membrane as a helical span at residues 365-390 (ILPGVLMLFLSFFAFLHCWLNAFAEM). Topologically, residues 391–438 (LRFGDRMFYKDWWNSTSYSNYYRTWNVVVHDWLYYYVYKDLLWFFSKR) are cytoplasmic. The FYXDWWN motif signature appears at 398–404 (FYKDWWN). An acyl-CoA is bound by residues Asn410, Arg413, Asn416, His420, Tyr428, and Ser451. A helical membrane pass occupies residues 439–463 (FRPAAMLAVFALSAVVHEYALAVCL). Residue His455 is part of the active site. At 464–469 (SYFYPV) the chain is on the lumenal side. A helical membrane pass occupies residues 470–485 (LFVLFMFFGMAFNFIV). Residues 486 to 491 (NDSRKR) lie on the Cytoplasmic side of the membrane. A helical membrane pass occupies residues 492 to 523 (PVWNIMVRASLFLGHGVILCFYSQEWYARQRC). The cysteines at positions 523 and 541 are disulfide-linked. Over 524-545 (PLKNPTFLDYVRPRTWTCRYVF) the chain is Lumenal.

The protein belongs to the membrane-bound acyltransferase family. Sterol o-acyltransferase subfamily. As to quaternary structure, may form homo- or heterodimers. Interacts with UBIAD1.

The protein resides in the endoplasmic reticulum membrane. The enzyme catalyses a sterol + a long-chain fatty acyl-CoA = a long-chain 3-hydroxysterol ester + CoA. The catalysed reaction is cholesterol + an acyl-CoA = a cholesterol ester + CoA. It carries out the reaction cholesterol + (9Z)-octadecenoyl-CoA = cholesteryl (9Z-octadecenoate) + CoA. It catalyses the reaction cholesterol + hexadecanoyl-CoA = cholesteryl hexadecanoate + CoA. The enzyme catalyses octadecanoyl-CoA + cholesterol = cholesteryl octadecanoate + CoA. The catalysed reaction is (9Z,12Z)-octadecadienoyl-CoA + cholesterol = cholesteryl (9Z,12Z)-octadecadienoate + CoA. It carries out the reaction (5Z,8Z,11Z,14Z)-eicosatetraenoyl-CoA + cholesterol = cholesteryl (5Z,8Z,11Z,14Z)-eicosatetraenoate + CoA. It catalyses the reaction (9Z)-hexadecenoyl-CoA + cholesterol = cholesteryl (9Z)-hexadecenoate + CoA. The enzyme catalyses (11Z)-octadecenoyl-CoA + cholesterol = cholesteryl (11Z)-octadecenoate + CoA. The catalysed reaction is (7Z)-octadecenoyl-CoA + cholesterol = cholesteryl (7Z)-octadecenoate + CoA. Functionally, catalyzes the formation of fatty acid-cholesterol esters, which are less soluble in membranes than cholesterol. Plays a role in lipoprotein assembly and dietary cholesterol absorption. Preferentially utilizes oleoyl-CoA ((9Z)-octadecenoyl-CoA) as substrate: shows a higher activity towards an acyl-CoA substrate with a double bond at the delta-9 position (9Z) than towards saturated acyl-CoA or an unsaturated acyl-CoA with a double bond at the delta-7 (7Z) or delta-11 (11Z) positions. The chain is Sterol O-acyltransferase 1 from Rattus norvegicus (Rat).